A 405-amino-acid chain; its full sequence is Glyceraldehyde-3-phosphate dehydrogenase A, chloroplastic (405 aa).

A chloroplast-targeting transit peptide spans 1–68; the sequence is MASATFSVAK…GHKKSLVVEA (68 aa). NADP(+)-binding positions include 80 to 81, D104, and R149; that span reads RI. Residues 221–223, T252, R267, 280–281, and R303 each bind D-glyceraldehyde 3-phosphate; these read SCT and TG. C222 functions as the Nucleophile in the catalytic mechanism. N385 provides a ligand contact to NADP(+).

Belongs to the glyceraldehyde-3-phosphate dehydrogenase family. Tetramer of either four A chains (GAPDH 2) or two A and two B chains (GAPDH 1).

It localises to the plastid. The protein resides in the chloroplast. It carries out the reaction D-glyceraldehyde 3-phosphate + phosphate + NADP(+) = (2R)-3-phospho-glyceroyl phosphate + NADPH + H(+). It participates in carbohydrate biosynthesis; Calvin cycle. In Pisum sativum (Garden pea), this protein is Glyceraldehyde-3-phosphate dehydrogenase A, chloroplastic (GAPA).